The sequence spans 179 residues: ATP synthase subunit delta (179 aa).

This sequence belongs to the ATPase delta chain family. F-type ATPases have 2 components, F(1) - the catalytic core - and F(0) - the membrane proton channel. F(1) has five subunits: alpha(3), beta(3), gamma(1), delta(1), epsilon(1). F(0) has three main subunits: a(1), b(2) and c(10-14). The alpha and beta chains form an alternating ring which encloses part of the gamma chain. F(1) is attached to F(0) by a central stalk formed by the gamma and epsilon chains, while a peripheral stalk is formed by the delta and b chains.

It is found in the cell membrane. Its function is as follows. F(1)F(0) ATP synthase produces ATP from ADP in the presence of a proton or sodium gradient. F-type ATPases consist of two structural domains, F(1) containing the extramembraneous catalytic core and F(0) containing the membrane proton channel, linked together by a central stalk and a peripheral stalk. During catalysis, ATP synthesis in the catalytic domain of F(1) is coupled via a rotary mechanism of the central stalk subunits to proton translocation. Functionally, this protein is part of the stalk that links CF(0) to CF(1). It either transmits conformational changes from CF(0) to CF(1) or is implicated in proton conduction. This is ATP synthase subunit delta from Staphylococcus haemolyticus (strain JCSC1435).